Here is a 268-residue protein sequence, read N- to C-terminus: Tryptophan synthase alpha chain (268 aa).

Active-site proton acceptor residues include E49 and D60.

This sequence belongs to the TrpA family. As to quaternary structure, tetramer of two alpha and two beta chains.

It carries out the reaction (1S,2R)-1-C-(indol-3-yl)glycerol 3-phosphate + L-serine = D-glyceraldehyde 3-phosphate + L-tryptophan + H2O. The protein operates within amino-acid biosynthesis; L-tryptophan biosynthesis; L-tryptophan from chorismate: step 5/5. The alpha subunit is responsible for the aldol cleavage of indoleglycerol phosphate to indole and glyceraldehyde 3-phosphate. The polypeptide is Tryptophan synthase alpha chain (Salmonella choleraesuis (strain SC-B67)).